A 201-amino-acid chain; its full sequence is 3-isopropylmalate dehydratase small subunit (201 aa).

The protein belongs to the LeuD family. LeuD type 1 subfamily. Heterodimer of LeuC and LeuD.

It carries out the reaction (2R,3S)-3-isopropylmalate = (2S)-2-isopropylmalate. It participates in amino-acid biosynthesis; L-leucine biosynthesis; L-leucine from 3-methyl-2-oxobutanoate: step 2/4. Catalyzes the isomerization between 2-isopropylmalate and 3-isopropylmalate, via the formation of 2-isopropylmaleate. The sequence is that of 3-isopropylmalate dehydratase small subunit from Enterobacter sp. (strain 638).